Reading from the N-terminus, the 145-residue chain is Basic leucine zipper 1 (145 aa).

Polar residues predominate over residues 1 to 11 (MANAEKTSSGS). The interval 1 to 39 (MANAEKTSSGSDIDEKKRKRKLSNRESARRSRLKKQKLM) is disordered. The region spanning 14–77 (DEKKRKRKLS…DSVETENAGL (64 aa)) is the bZIP domain. The segment at 16–37 (KKRKRKLSNRESARRSRLKKQK) is basic motif. Residues 46–53 (ISSLERRI) are leucine-zipper.

This sequence belongs to the bZIP family. In terms of assembly, interacts with ZFP7, BZIP4, BZIP9, BZIP10, BZIP11, BZIP25, BZIP42, BZIP44, BZIP53, BZIP58 and BZIP63. Expressed in both shoots, including young leaves, stipulae and trichomes (except in cotyledons and hypocotyl), and roots, including vascular tissues (e.g. in both the phloem and the xylem). Present in seeds and pollen. Restricted to vasculatures and roots in the presence of sucrose or glucose.

The protein localises to the nucleus. Functionally, transcription factor that binds to the C-box-like motif (5'-TGCTGACGTCA-3') and G-box-like motif (5'-CCACGTGGCC-3'), ABRE elements, of gene promoters involved in sugar signaling. Activated by low energy stress both at transcriptional and post-transcriptional mechanisms. Promotes dark-induced senescence and participates in the transcriptional reprogramming of amino acid metabolism during the dark-induced starvation response. Transcription activator of the mannan synthase CSLA9. Recognizes and binds to DNA-specific sequence of CSLA9 promoter. The protein is Basic leucine zipper 1 (BZIP1) of Arabidopsis thaliana (Mouse-ear cress).